Consider the following 183-residue polypeptide: Glutathione-regulated potassium-efflux system ancillary protein KefG (183 aa).

This sequence belongs to the NAD(P)H dehydrogenase (quinone) family. KefG subfamily. Interacts with KefB.

The protein localises to the cell inner membrane. It carries out the reaction a quinone + NADH + H(+) = a quinol + NAD(+). It catalyses the reaction a quinone + NADPH + H(+) = a quinol + NADP(+). In terms of biological role, regulatory subunit of a potassium efflux system that confers protection against electrophiles. Required for full activity of KefB. The chain is Glutathione-regulated potassium-efflux system ancillary protein KefG from Pectobacterium carotovorum subsp. carotovorum (strain PC1).